A 629-amino-acid polypeptide reads, in one-letter code: tRNA uridine 5-carboxymethylaminomethyl modification enzyme MnmG (629 aa).

An FAD-binding site is contributed by 13–18; the sequence is GGGHAG. 273–287 lines the NAD(+) pocket; the sequence is GPRYCPSIEDKIHRF.

The protein belongs to the MnmG family. In terms of assembly, homodimer. Heterotetramer of two MnmE and two MnmG subunits. It depends on FAD as a cofactor.

It localises to the cytoplasm. In terms of biological role, NAD-binding protein involved in the addition of a carboxymethylaminomethyl (cmnm) group at the wobble position (U34) of certain tRNAs, forming tRNA-cmnm(5)s(2)U34. This Shewanella baltica (strain OS185) protein is tRNA uridine 5-carboxymethylaminomethyl modification enzyme MnmG.